Reading from the N-terminus, the 58-residue chain is UPF0391 membrane protein Bxeno_A2959 (58 aa).

2 helical membrane-spanning segments follow: residues 4-24 (WALF…TGVA) and 33-53 (FLFI…FVVT).

It belongs to the UPF0391 family.

Its subcellular location is the cell membrane. This is UPF0391 membrane protein Bxeno_A2959 from Paraburkholderia xenovorans (strain LB400).